The primary structure comprises 52 residues: LIRRPLFSFLTPTRIFDQSFGEHLSESELFPTSGALSPFLLRSPFLRTPSWL.

Belongs to the small heat shock protein (HSP20) family. Homodimer. Aggregates with homologous proteins, including alpha-A-crystallin and the small heat shock protein HSPB1, to form large heteromeric complexes.

Its function is as follows. May contribute to the transparency and refractive index of the lens. The sequence is that of Alpha-crystallin B chain (CRYAB) from Trachemys scripta elegans (Red-eared slider turtle).